The chain runs to 432 residues: uncharacterized protein (432 aa).

Residue Lys243 is modified to N6-(pyridoxal phosphate)lysine.

This sequence belongs to the class-II pyridoxal-phosphate-dependent aminotransferase family. It depends on pyridoxal 5'-phosphate as a cofactor.

The protein resides in the cytoplasm. This is an uncharacterized protein from Methanocaldococcus jannaschii (strain ATCC 43067 / DSM 2661 / JAL-1 / JCM 10045 / NBRC 100440) (Methanococcus jannaschii).